The sequence spans 420 residues: Pre-mRNA-splicing factor RBM22 (420 aa).

A C3H1-type zinc finger spans residues 159–186 (RNRPHICSFWVKGECKRGEECPYRHEKP). One can recognise an RRM domain in the interval 232–305 (TTLYVGGLGD…RRLNVKWGRS (74 aa)). Disordered stretches follow at residues 303–343 (GRSQ…AAEE) and 372–420 (APPP…HSSP). The segment covering 309-318 (RGKEKDKEGT) has biased composition (basic and acidic residues).

The protein belongs to the SLT11 family. In terms of assembly, component of the pre-catalytic and catalytic spliceosome complexes. Component of the postcatalytic spliceosome P complex.

The protein localises to the nucleus. It is found in the cytoplasm. Its function is as follows. Required for pre-mRNA splicing as component of the activated spliceosome. Involved in the first step of pre-mRNA splicing. Binds directly to the internal stem-loop (ISL) domain of the U6 snRNA and to the pre-mRNA intron near the 5' splice site during the activation and catalytic phases of the spliceosome cycle. This chain is Pre-mRNA-splicing factor RBM22 (RBM22), found in Gallus gallus (Chicken).